Here is an 89-residue protein sequence, read N- to C-terminus: Probable oxaloacetate decarboxylase gamma chain (89 aa).

Residues 13–33 (LMLSGMGFVITFLLILIWAIT) traverse the membrane as a helical segment.

This sequence belongs to the OadG family. In terms of assembly, heterotrimer of an alpha, a beta and a gamma subunit. The cofactor is Na(+).

Its subcellular location is the cell membrane. The enzyme catalyses oxaloacetate + 2 Na(+)(in) + H(+) = pyruvate + 2 Na(+)(out) + CO2. Catalyzes the decarboxylation of oxaloacetate coupled to Na(+) translocation. The protein is Probable oxaloacetate decarboxylase gamma chain of Actinobacillus succinogenes (strain ATCC 55618 / DSM 22257 / CCUG 43843 / 130Z).